The sequence spans 360 residues: Peptide chain release factor 1 (360 aa).

N5-methylglutamine is present on glutamine 235. Residues 284-313 (AKRQQAEASTRRNLLGSGDRSDRNRTYNFP) form a disordered region.

It belongs to the prokaryotic/mitochondrial release factor family. Methylated by PrmC. Methylation increases the termination efficiency of RF1.

The protein localises to the cytoplasm. Its function is as follows. Peptide chain release factor 1 directs the termination of translation in response to the peptide chain termination codons UAG and UAA. The chain is Peptide chain release factor 1 from Escherichia coli O127:H6 (strain E2348/69 / EPEC).